The following is a 1634-amino-acid chain: Probable serine/threonine-protein kinase DDB_G0282895 (1634 aa).

Residues 40–63 (YKGNLNENKLKNGKGTFLFPNSIY) form an MORN 1 repeat. The segment at 84–131 (QKIQKKSSQSKSQQQPPSQTKKSSSPINLSPRLQGQNPTITTNGSNNN) is disordered. Low complexity predominate over residues 89–109 (KSSQSKSQQQPPSQTKKSSSP). Residues 110–119 (INLSPRLQGQ) are compositionally biased toward polar residues. The span at 120 to 131 (NPTITTNGSNNN) shows a compositional bias: low complexity. Residues 169–191 (YNGKWINGKANGIGCFHFSKDDS) form an MORN 2 repeat. Low complexity-rich tracts occupy residues 273–292 (SNNNSNGTTSPTSPSILSPT) and 318–339 (SGSGFCSPSSSLSIKMSSPISS). Disordered stretches follow at residues 273–367 (SNNN…QQQQ), 658–750 (TTAT…TFSV), and 783–816 (SSILNNNNNNNNNNNNNNNNNNNNNNNNNNNCGQ). Residues 340–351 (GLQHSKTQPNVS) are compositionally biased toward polar residues. Low complexity-rich tracts occupy residues 352–367 (QSQNQQIQQQQQQQQQ), 658–688 (TTATPNNNNNSSGNSKLTTTTHLTNNTTTTT), and 703–715 (PPSQSSSSSSPSS). The segment covering 716–732 (DQTNLPSIAISSSNGIS) has biased composition (polar residues). Residues 787–813 (NNNNNNNNNNNNNNNNNNNNNNNNNNN) show a composition bias toward low complexity. A helical transmembrane segment spans residues 1255 to 1275 (IFIGFMELCVIDELCGFSFIY). The Protein kinase domain occupies 1377–1634 (LQILQFLGEG…IIQKLCNHKC (258 aa)). ATP contacts are provided by residues 1383–1391 (LGEGALAEV) and Lys-1404. Residue Asp-1500 is the Proton acceptor of the active site.

Belongs to the protein kinase superfamily. TKL Ser/Thr protein kinase family.

The protein resides in the membrane. It carries out the reaction L-seryl-[protein] + ATP = O-phospho-L-seryl-[protein] + ADP + H(+). The catalysed reaction is L-threonyl-[protein] + ATP = O-phospho-L-threonyl-[protein] + ADP + H(+). The sequence is that of Probable serine/threonine-protein kinase DDB_G0282895 from Dictyostelium discoideum (Social amoeba).